A 147-amino-acid chain; its full sequence is Hemoglobin subunit gamma (147 aa).

Residues 3–147 (HFTAEEKAII…VATALAHKYH (145 aa)) enclose the Globin domain. Heme b-binding residues include H64 and H93.

This sequence belongs to the globin family. In terms of assembly, heterotetramer of two alpha chains and two gamma chains in fetal hemoglobin (Hb F). Red blood cells.

Gamma chains make up the fetal hemoglobin F, in combination with alpha chains. The chain is Hemoglobin subunit gamma (HBG) from Otolemur crassicaudatus (Brown greater galago).